We begin with the raw amino-acid sequence, 197 residues long: Small ribosomal subunit protein uS2 (197 aa).

It belongs to the universal ribosomal protein uS2 family.

This is Small ribosomal subunit protein uS2 (rps2) from Archaeoglobus fulgidus (strain ATCC 49558 / DSM 4304 / JCM 9628 / NBRC 100126 / VC-16).